The chain runs to 386 residues: MAP kinase-activated protein kinase 2 (386 aa).

The interval 1 to 29 (MLSGSPGQTPPAPFPSPPPPAPAQPPPPF) is disordered. Residues 8 to 29 (QTPPAPFPSPPPPAPAQPPPPF) are compositionally biased toward pro residues. One can recognise a Protein kinase domain in the interval 50–311 (KVTSQVLGLG…ITEFMNHPWI (262 aa)). ATP is bound by residues 56 to 64 (LGLGINGKV) and lysine 79. 125–127 (ECL) provides a ligand contact to staurosporine. Aspartate 172 (proton acceptor) is an active-site residue. Threonine 208 bears the Phosphothreonine; by MAPK14 mark. Serine 258 is modified (phosphoserine; by MAPK14). The residue at position 314 (serine 314) is a Phosphoserine; by autocatalysis. Residues 314–350 (STKVPQTPLHTSRVLKEDKERWEDVKEEMTSALATMR) form an autoinhibitory helix region. Position 320 is a phosphothreonine; by MAPK14 (threonine 320). 2 short sequence motifs (nuclear export signal (NES)) span residues 331–354 (DKER…VDYE) and 342–351 (MTSALATMRV). A Glycyl lysine isopeptide (Lys-Gly) (interchain with G-Cter in SUMO) cross-link involves residue lysine 339. The tract at residues 352–376 (DYEQIKIKKIEDASNPLLLKRRKKA) is p38 MAPK-binding site. 2 consecutive short sequence motifs (bipartite nuclear localization signal) follow at residues 357-360 (KIKK) and 371-375 (KRRKK).

It belongs to the protein kinase superfamily. CAMK Ser/Thr protein kinase family. As to quaternary structure, heterodimer with p38-alpha/MAPK14; this heterodimer forms a stable complex: molecules are positioned 'face to face' so that the ATP-binding sites of both kinases are at the heterodimer interface. Interacts with PHC2. Interacts with HSF1. Sumoylation inhibits the protein kinase activity. In terms of processing, phosphorylated and activated by MAP kinase p38-alpha/MAPK14 at Thr-208; Ser-258 and Thr-320. As to expression, ubiquitously expressed (at protein level).

It localises to the cytoplasm. It is found in the nucleus. It carries out the reaction L-seryl-[protein] + ATP = O-phospho-L-seryl-[protein] + ADP + H(+). The enzyme catalyses L-threonyl-[protein] + ATP = O-phospho-L-threonyl-[protein] + ADP + H(+). Activated following phosphorylation by p38-alpha/MAPK14 following various stresses. Inhibited following sumoylation. Specifically inhibited by pyrrolopyridine inhibitors. Stress-activated serine/threonine-protein kinase involved in cytokine production, endocytosis, reorganization of the cytoskeleton, cell migration, cell cycle control, chromatin remodeling, DNA damage response and transcriptional regulation. Following stress, it is phosphorylated and activated by MAP kinase p38-alpha/MAPK14, leading to phosphorylation of substrates. Phosphorylates serine in the peptide sequence, Hyd-X-R-X(2)-S, where Hyd is a large hydrophobic residue. Phosphorylates ALOX5, CDC25B, CDC25C, CEP131, ELAVL1, HNRNPA0, HSP27/HSPB1, KRT18, KRT20, LIMK1, LSP1, PABPC1, PARN, PDE4A, RCSD1, RPS6KA3, TAB3 and TTP/ZFP36. Phosphorylates HSF1; leading to the interaction with HSP90 proteins and inhibiting HSF1 homotrimerization, DNA-binding and transactivation activities. Mediates phosphorylation of HSP27/HSPB1 in response to stress, leading to dissociation of HSP27/HSPB1 from large small heat-shock protein (sHsps) oligomers and impairment of their chaperone activities and ability to protect against oxidative stress effectively. Involved in inflammatory response by regulating tumor necrosis factor (TNF) and IL6 production post-transcriptionally: acts by phosphorylating AU-rich elements (AREs)-binding proteins ELAVL1, HNRNPA0, PABPC1 and TTP/ZFP36, leading to regulation of the stability and translation of TNF and IL6 mRNAs. Phosphorylation of TTP/ZFP36, a major post-transcriptional regulator of TNF, promotes its binding to 14-3-3 proteins and reduces its ARE mRNA affinity leading to inhibition of dependent degradation of ARE-containing transcripts. Phosphorylates CEP131 in response to cellular stress following ultraviolet irradiation which promotes binding of CEP131 to 14-3-3 proteins and inhibits formation of novel centriolar satellites. Also involved in late G2/M checkpoint following DNA damage through a process of post-transcriptional mRNA stabilization: following DNA damage, relocalizes from nucleus to cytoplasm and phosphorylates HNRNPA0 and PARN, leading to stabilization of GADD45A mRNA. Involved in toll-like receptor signaling pathway (TLR) in dendritic cells: required for acute TLR-induced macropinocytosis by phosphorylating and activating RPS6KA3. The chain is MAP kinase-activated protein kinase 2 (Mapkapk2) from Mus musculus (Mouse).